Here is an 869-residue protein sequence, read N- to C-terminus: Leucine--tRNA ligase (869 aa).

Positions 42 to 52 (PYPSGNLHMGH) match the 'HIGH' region motif. Residues 622 to 626 (KMSKS) carry the 'KMSKS' region motif. Residue Lys-625 participates in ATP binding.

It belongs to the class-I aminoacyl-tRNA synthetase family.

Its subcellular location is the cytoplasm. The enzyme catalyses tRNA(Leu) + L-leucine + ATP = L-leucyl-tRNA(Leu) + AMP + diphosphate. The polypeptide is Leucine--tRNA ligase (Synechocystis sp. (strain ATCC 27184 / PCC 6803 / Kazusa)).